We begin with the raw amino-acid sequence, 754 residues long: 5-methyltetrahydropteroyltriglutamate--homocysteine methyltransferase (754 aa).

5-methyltetrahydropteroyltri-L-glutamate contacts are provided by residues 17–20 (RELK) and lysine 117. Residues 431-433 (IGS) and glutamate 484 each bind L-homocysteine. L-methionine is bound by residues 431-433 (IGS) and glutamate 484. 5-methyltetrahydropteroyltri-L-glutamate is bound by residues 515–516 (RC) and tryptophan 561. Aspartate 599 lines the L-homocysteine pocket. Aspartate 599 serves as a coordination point for L-methionine. Glutamate 605 is a 5-methyltetrahydropteroyltri-L-glutamate binding site. Residues histidine 641, cysteine 643, and glutamate 665 each coordinate Zn(2+). Histidine 694 serves as the catalytic Proton donor. Position 726 (cysteine 726) interacts with Zn(2+).

The protein belongs to the vitamin-B12 independent methionine synthase family. Zn(2+) is required as a cofactor.

It carries out the reaction 5-methyltetrahydropteroyltri-L-glutamate + L-homocysteine = tetrahydropteroyltri-L-glutamate + L-methionine. It functions in the pathway amino-acid biosynthesis; L-methionine biosynthesis via de novo pathway; L-methionine from L-homocysteine (MetE route): step 1/1. Functionally, catalyzes the transfer of a methyl group from 5-methyltetrahydrofolate to homocysteine resulting in methionine formation. The polypeptide is 5-methyltetrahydropteroyltriglutamate--homocysteine methyltransferase (Salmonella paratyphi B (strain ATCC BAA-1250 / SPB7)).